Reading from the N-terminus, the 91-residue chain is Acyl-CoA-binding domain-containing protein 1 (91 aa).

Residues 3-88 (LQEDFEQYAE…VKQLLEEAAA (86 aa)) enclose the ACB domain. An acyl-CoA contacts are provided by residues Lys-15, 30 to 34 (YGLYK), Lys-56, and Tyr-75.

It belongs to the ACBP family. Highly expressed in leaves. Expressed at low levels in roots and seeds.

The protein localises to the cytoplasm. It is found in the cytosol. Its function is as follows. Binds medium- and long-chain acyl-CoA esters with high affinity. Can interact in vitro with palmitoyl-CoA, oleoyl-CoA, linoleoyl-CoA and linolenoyl-CoA. Binds phosphatidic acid (PA) and phosphatidylcholine (PC) in vitro. May play a role in the biosynthesis of phospholipids. The protein is Acyl-CoA-binding domain-containing protein 1 of Oryza sativa subsp. japonica (Rice).